Consider the following 122-residue polypeptide: uncharacterized protein (122 aa).

The next 2 membrane-spanning stretches (helical) occupy residues 43 to 63 and 76 to 96; these read PIIITLFIFSFVISRMIIFFI and AVADAIINSIALVCIIVILYF.

It localises to the membrane. This is an uncharacterized protein from Schizosaccharomyces pombe (strain 972 / ATCC 24843) (Fission yeast).